We begin with the raw amino-acid sequence, 126 residues long: Putative lipoprotein LprD (126 aa).

An N-terminal signal peptide occupies residues methionine 1–glycine 21. Residue cysteine 22 is the site of N-palmitoyl cysteine attachment. Cysteine 22 carries the S-diacylglycerol cysteine lipid modification. The chain crosses the membrane as a helical span at residues phenylalanine 40–tyrosine 60. Positions proline 70 to proline 101 are disordered.

To M.leprae ML1177.

The protein localises to the cell membrane. This Mycobacterium tuberculosis (strain CDC 1551 / Oshkosh) protein is Putative lipoprotein LprD (lprD).